The chain runs to 717 residues: MSGKCPVMHGGNTSTGTSNKDWWPEGINLDILHQHDRKTNPMDPDFNYREEVKKLDVQALKNDLRQLMVDSQAWWPADWGSYVGMFARVAWHSAGSYRLADGRGGGGTGNQRFAPLNSWPDNVNTDKGRRLLWPIKKKYGNKISWADLMVLSGTIAYEVAGLKTYGFAFGREDIWHPEKDIYWGDEKEWLAPSDERYADVEKPDTMENPLAAVQMGLIYVNPEGVNGQPDPQKTAEQVRETFARMAMNDEETAALTAGGHTIGKCHGNGEAENLSAEPEAADVEYQGIGWMNTKGRGIGRDTVVSGIEGAWTKNPTQWDMGWFDMLFNHEWELKKSPAGAWQWEPVDIAEEDMPVDVEDPSIRRMPIMTDADMAMKVDPVYNEICRKFMDDPEYFSETFAKAWFKLTHRDLGPKARYIGPDVPADDLIWQDPIPAGSIAYCEEVVKQKIAESGLSIGEMVSTAWDSARTYRGSDMRGGANGARIRLAPQKTWPGNEPERLAKVLDVYERISAETGASIADVIVLGGSVGIERAAKAAGHDVHVPFLKGRGDATDEMTDAASFAPLEPLADGFRNWQKQDYVVKPEEMLLDRAQLMGLTGPEMTVLIGGMRVLGTNHGGTRHGVFTDREGQLTNDFFVNLTDMGNTWKPAGNNVYEIRDRETDAVKWTASRVDLVFGSNSLLRSYAEVYAQDDNEEKFVNDFVAAWTKVMNADRFDVA.

The segment at 1 to 20 (MSGKCPVMHGGNTSTGTSNK) is disordered. The segment covering 11–20 (GNTSTGTSNK) has biased composition (polar residues). Residues 91–219 (WHSAGSYRLA…LAAVQMGLIY (129 aa)) constitute a cross-link (tryptophyl-tyrosyl-methioninium (Trp-Tyr) (with M-245)). His92 acts as the Proton acceptor in catalysis. The tryptophyl-tyrosyl-methioninium (Tyr-Met) (with W-91) cross-link spans 219–245 (YVNPEGVNGQPDPQKTAEQVRETFARM). Heme b is bound at residue His260.

The protein belongs to the peroxidase family. Peroxidase/catalase subfamily. In terms of assembly, homodimer or homotetramer. Heme b serves as cofactor. Formation of the three residue Trp-Tyr-Met cross-link is important for the catalase, but not the peroxidase activity of the enzyme.

The catalysed reaction is H2O2 + AH2 = A + 2 H2O. The enzyme catalyses 2 H2O2 = O2 + 2 H2O. Bifunctional enzyme with both catalase and broad-spectrum peroxidase activity. The polypeptide is Catalase-peroxidase (Chromohalobacter salexigens (strain ATCC BAA-138 / DSM 3043 / CIP 106854 / NCIMB 13768 / 1H11)).